The chain runs to 277 residues: tRNA pseudouridine synthase B (277 aa).

The Nucleophile role is filled by Asp38.

The protein belongs to the pseudouridine synthase TruB family. Type 1 subfamily.

The enzyme catalyses uridine(55) in tRNA = pseudouridine(55) in tRNA. Responsible for synthesis of pseudouridine from uracil-55 in the psi GC loop of transfer RNAs. The protein is tRNA pseudouridine synthase B of Sulfurovum sp. (strain NBC37-1).